A 586-amino-acid polypeptide reads, in one-letter code: Heterogeneous nuclear ribonucleoprotein L (586 aa).

Positions 1-16 are enriched in basic residues; it reads MSRRLLPRAEKRRRRL. Positions 1–97 are disordered; the sequence is MSRRLLPRAE…NYDDPHKTPA (97 aa). A compositionally biased stretch (basic and acidic residues) spans 17–27; it reads EQRQQPDEQLR. The span at 28 to 37 shows a compositional bias: low complexity; that stretch reads RAGAMVKMAA. Over residues 38-54 the composition is skewed to gly residues; that stretch reads AGGGGGGGRYYGGGNEG. Glycyl lysine isopeptide (Lys-Gly) (interchain with G-Cter in SUMO2) cross-links involve residues lysine 59 and lysine 62. Residues 69 to 87 are compositionally biased toward gly residues; it reads QHGGGGGGGSGAAGGGGGE. Serine 98 is subject to Phosphoserine. The region spanning 99-173 is the RRM 1 domain; the sequence is PVVHIRGLID…HPAFVNYSTS (75 aa). Lysine 133 is covalently cross-linked (Glycyl lysine isopeptide (Lys-Gly) (interchain with G-Cter in SUMO2)). Residue serine 182 is modified to Phosphoserine. The RRM 2 domain occupies 190–267; sequence SVLLFTILNP…CTLKIEYAKP (78 aa). Lysine 266 is subject to N6-acetyllysine. Over residues 281 to 298 the composition is skewed to polar residues; sequence DYTNPNLSGQGDPGSNPN. The segment at 281–376 is disordered; that stretch reads DYTNPNLSGQ…PPPPDYGPHA (96 aa). Serine 288 and serine 295 each carry phosphoserine. Lysine 299 participates in a covalent cross-link: Glycyl lysine isopeptide (Lys-Gly) (interchain with G-Cter in SUMO2). An asymmetric dimethylarginine mark is found at arginine 351 and arginine 355. The segment covering 361 to 372 has biased composition (pro residues); that stretch reads GHPPPPPPPPDY. Serine 378 is subject to Phosphoserine. 2 consecutive RRM domains span residues 379-476 and 492-580; these read PVLM…DFSE and RIQH…LCFS. The residue at position 541 (serine 541) is a Phosphoserine; by CaMK4. Residue lysine 565 forms a Glycyl lysine isopeptide (Lys-Gly) (interchain with G-Cter in SUMO2) linkage.

Identified in a IGF2BP1-dependent mRNP granule complex containing untranslated mRNAs. Interacts with HNRNPLL. Interacts with APEX1; the interaction is DNA-dependent. Component of a complex with SETD2. Interacts with ELAVL1. Part of a transcription inhibitory ribonucleoprotein complex composed at least of the circular RNA circZNF827, ZNF827 and HNRNPK. Interacts with CHD8 in an RNA-dependent manner. In terms of processing, phosphorylation at Ser-541 by CaMK4 enhances interaction with a CaMK4-responsive RNA element (CaRRE1), and prevents inclusion of the stress axis-regulated exon (STREX) of the KCNMA1 potassium channel transcripts upon membrane depolarization. Detected in hematopoietic cells, including lymphoid progenitor cells.

The protein localises to the nucleus. Its subcellular location is the nucleoplasm. It is found in the cytoplasm. Functionally, splicing factor binding to exonic or intronic sites and acting as either an activator or repressor of exon inclusion. Exhibits a binding preference for CA-rich elements. Component of the heterogeneous nuclear ribonucleoprotein (hnRNP) complexes and associated with most nascent transcripts. Associates, together with APEX1, to the negative calcium responsive element (nCaRE) B2 of the APEX2 promoter. As part of a ribonucleoprotein complex composed at least of ZNF827, HNRNPK and the circular RNA circZNF827 that nucleates the complex on chromatin, may negatively regulate the transcription of genes involved in neuronal differentiation. Regulates alternative splicing of a core group of genes involved in neuronal differentiation, likely by mediating H3K36me3-coupled transcription elongation and co-transcriptional RNA processing via interaction with CHD8. This is Heterogeneous nuclear ribonucleoprotein L (Hnrnpl) from Mus musculus (Mouse).